The primary structure comprises 502 residues: Cytochrome P450 monooxygenase pyr9 (502 aa).

Residues 5–25 traverse the membrane as a helical segment; it reads EDASIGTVWVTCLLAVGLYFI. Residues Asn-205, Asn-291, and Asn-372 are each glycosylated (N-linked (GlcNAc...) asparagine). Cys-437 contacts heme.

It belongs to the cytochrome P450 family. Heme serves as cofactor.

The protein localises to the membrane. Its pathway is secondary metabolite biosynthesis; terpenoid biosynthesis. Its function is as follows. Cytochrome P450 monooxygenase; part of the gene cluster that mediates the biosynthesis of pyripyropene A, a specific human acyl-coenzyme A:cholesterol acyltransferase 2 inhibitor. The first step of the pathway is the synthesis of nicotinyl-CoA from nicotinic acid by the nicotinic acid-CoA ligase pyr1. Nicotinyl-CoA is then a substrate of polyketide synthase pyr2 to produce 4-hydroxy-6-(3-pyridinyl)-2H-pyran-2-one (HPPO) which is further prenylated by the polyprenyl transferase pyr6 to yield farnesyl-HPPO. The next steps consist of an epoxidation of farnesyl-HPPO to epoxyfarnesyl-HPPO by FAD-dependent monooxygenase pyr5 and a cyclization of the terpenoid portion by the terpene cyclase pyr4 to yield deacetyl-pyripyropene E. The 2 cytochrome P450 monooxygenases pyr3 and pyr9, and the 2 acetyltransferases pyr7 and pyr8 are involved in the conversion of deacetyl-pyripyropene E into pyripyropene A through several cycles of oxidation and acetylation steps. Pyr7 acetylates deacetyl-pyripyropene E to pyripyropene E which is oxidized to 11-deacetyl-pyripyropene O by pyr3, which is in turn acetylated into pyripyropene O by pyr8. Pyripyropene O is then oxidized to deacetyl-pyripyropene A by pyr9. Deacetyl-pyripyropene A is finally acetylated to pyripyropene A by pyr8. The protein is Cytochrome P450 monooxygenase pyr9 of Aspergillus fumigatus (strain ATCC MYA-4609 / CBS 101355 / FGSC A1100 / Af293) (Neosartorya fumigata).